The sequence spans 346 residues: Nicotinate-nucleotide--dimethylbenzimidazole phosphoribosyltransferase (346 aa).

The Proton acceptor role is filled by Glu312.

This sequence belongs to the CobT family.

The enzyme catalyses 5,6-dimethylbenzimidazole + nicotinate beta-D-ribonucleotide = alpha-ribazole 5'-phosphate + nicotinate + H(+). It participates in nucleoside biosynthesis; alpha-ribazole biosynthesis; alpha-ribazole from 5,6-dimethylbenzimidazole: step 1/2. Functionally, catalyzes the synthesis of alpha-ribazole-5'-phosphate from nicotinate mononucleotide (NAMN) and 5,6-dimethylbenzimidazole (DMB). The chain is Nicotinate-nucleotide--dimethylbenzimidazole phosphoribosyltransferase from Cupriavidus necator (strain ATCC 17699 / DSM 428 / KCTC 22496 / NCIMB 10442 / H16 / Stanier 337) (Ralstonia eutropha).